A 134-amino-acid chain; its full sequence is Putative integral membrane protein YxzK (134 aa).

4 helical membrane passes run Val3–Ile23, Ile35–Ile55, Gly58–Ile78, and Leu89–Ala109.

The protein localises to the cell membrane. The chain is Putative integral membrane protein YxzK (yxzK) from Bacillus subtilis (strain 168).